A 281-amino-acid polypeptide reads, in one-letter code: MSKFLVKAPAKINLFLHILGKNNNYHSLESLLVFVNIYDILEVTIDAPRSGVYFTNLKINRYNNTITKVIYLLSQHSTSSVNVFVSVIKNILVSAGLAGGSADAAAVMRLLGNVWDIQPQVLEELALEIGSDVPACLHSKTLFARGRGEDILLLPDLCLPKYIVIVAPKGKPLSTVKVFNNYEPSAFSSPICDNLPVRQDDWLELIYNARNDLLDTALKFVPEIEEILFVLRKFRNCLIARMTGSGATCFALFNELSDAEVVVRELQMTRPDWIVFNAKIL.

Residue Lys-11 is part of the active site. 92-102 (LVSAGLAGGSA) contacts ATP. Asp-132 is an active-site residue.

It belongs to the GHMP kinase family. IspE subfamily.

It catalyses the reaction 4-CDP-2-C-methyl-D-erythritol + ATP = 4-CDP-2-C-methyl-D-erythritol 2-phosphate + ADP + H(+). It participates in isoprenoid biosynthesis; isopentenyl diphosphate biosynthesis via DXP pathway; isopentenyl diphosphate from 1-deoxy-D-xylulose 5-phosphate: step 3/6. In terms of biological role, catalyzes the phosphorylation of the position 2 hydroxy group of 4-diphosphocytidyl-2C-methyl-D-erythritol. In Ehrlichia ruminantium (strain Gardel), this protein is 4-diphosphocytidyl-2-C-methyl-D-erythritol kinase.